We begin with the raw amino-acid sequence, 195 residues long: ADP-ribosylation factor L (195 aa).

A lipid anchor (N-myristoyl glycine) is attached at glycine 2. Residues 25-32, 72-76, and 131-134 each bind GTP; these read GLENSGKT, DLLYP, and NKQD.

It belongs to the small GTPase superfamily. Arf family.

Functionally, may be involved in trafficking events within the endosomal system. This Dictyostelium discoideum (Social amoeba) protein is ADP-ribosylation factor L (arrL).